The sequence spans 544 residues: Chaperonin GroEL (544 aa).

ATP-binding positions include 29–32 (TMGP), Lys-50, 86–90 (DGTTT), Gly-414, 477–479 (NAV), and Asp-493.

It belongs to the chaperonin (HSP60) family. Forms a cylinder of 14 subunits composed of two heptameric rings stacked back-to-back. Interacts with the co-chaperonin GroES.

Its subcellular location is the cytoplasm. The enzyme catalyses ATP + H2O + a folded polypeptide = ADP + phosphate + an unfolded polypeptide.. In terms of biological role, together with its co-chaperonin GroES, plays an essential role in assisting protein folding. The GroEL-GroES system forms a nano-cage that allows encapsulation of the non-native substrate proteins and provides a physical environment optimized to promote and accelerate protein folding. The polypeptide is Chaperonin GroEL (Campylobacter curvus (strain 525.92)).